The primary structure comprises 366 residues: tRNA/tmRNA (uracil-C(5))-methyltransferase (366 aa).

S-adenosyl-L-methionine contacts are provided by Gln-190, Tyr-218, Asn-223, Glu-239, and Asp-299. The active-site Nucleophile is Cys-324. Glu-358 serves as the catalytic Proton acceptor.

The protein belongs to the class I-like SAM-binding methyltransferase superfamily. RNA M5U methyltransferase family. TrmA subfamily.

It catalyses the reaction uridine(54) in tRNA + S-adenosyl-L-methionine = 5-methyluridine(54) in tRNA + S-adenosyl-L-homocysteine + H(+). The enzyme catalyses uridine(341) in tmRNA + S-adenosyl-L-methionine = 5-methyluridine(341) in tmRNA + S-adenosyl-L-homocysteine + H(+). Its function is as follows. Dual-specificity methyltransferase that catalyzes the formation of 5-methyluridine at position 54 (m5U54) in all tRNAs, and that of position 341 (m5U341) in tmRNA (transfer-mRNA). This is tRNA/tmRNA (uracil-C(5))-methyltransferase from Escherichia coli (strain UTI89 / UPEC).